The sequence spans 332 residues: 5-dehydro-2-deoxygluconokinase (332 aa).

This sequence belongs to the carbohydrate kinase PfkB family.

The catalysed reaction is 5-dehydro-2-deoxy-D-gluconate + ATP = 6-phospho-5-dehydro-2-deoxy-D-gluconate + ADP + H(+). The protein operates within polyol metabolism; myo-inositol degradation into acetyl-CoA; acetyl-CoA from myo-inositol: step 5/7. Its function is as follows. Catalyzes the phosphorylation of 5-dehydro-2-deoxy-D-gluconate (2-deoxy-5-keto-D-gluconate or DKG) to 6-phospho-5-dehydro-2-deoxy-D-gluconate (DKGP). In Bacillus thuringiensis (strain Al Hakam), this protein is 5-dehydro-2-deoxygluconokinase.